The sequence spans 273 residues: Eukaryotic translation initiation factor 3 subunit G-2 (273 aa).

The tract at residues 165–193 (KYVPPFMKDGGGGPGGKNWGRGRERDDSS) is disordered. The span at 173-183 (DGGGGPGGKNW) shows a compositional bias: gly residues. Residues 193 to 271 (SAVRISNLSE…LILCVEWSKP (79 aa)) enclose the RRM domain.

This sequence belongs to the eIF-3 subunit G family. Component of the eukaryotic translation initiation factor 3 (eIF-3) complex. The eIF-3 complex interacts with pix.

The protein resides in the cytoplasm. Functionally, RNA-binding component of the eukaryotic translation initiation factor 3 (eIF-3) complex, which is involved in protein synthesis of a specialized repertoire of mRNAs and, together with other initiation factors, stimulates binding of mRNA and methionyl-tRNAi to the 40S ribosome. The eIF-3 complex specifically targets and initiates translation of a subset of mRNAs involved in cell proliferation. This subunit can bind 18S rRNA. The chain is Eukaryotic translation initiation factor 3 subunit G-2 from Drosophila yakuba (Fruit fly).